Consider the following 308-residue polypeptide: Aspartate carbamoyltransferase catalytic subunit (308 aa).

Residues arginine 57 and threonine 58 each coordinate carbamoyl phosphate. Lysine 86 contacts L-aspartate. Carbamoyl phosphate-binding residues include arginine 107, histidine 135, and glutamine 138. Positions 168 and 228 each coordinate L-aspartate. Carbamoyl phosphate is bound by residues leucine 267 and proline 268.

It belongs to the aspartate/ornithine carbamoyltransferase superfamily. ATCase family. In terms of assembly, heterododecamer (2C3:3R2) of six catalytic PyrB chains organized as two trimers (C3), and six regulatory PyrI chains organized as three dimers (R2).

The enzyme catalyses carbamoyl phosphate + L-aspartate = N-carbamoyl-L-aspartate + phosphate + H(+). It participates in pyrimidine metabolism; UMP biosynthesis via de novo pathway; (S)-dihydroorotate from bicarbonate: step 2/3. Functionally, catalyzes the condensation of carbamoyl phosphate and aspartate to form carbamoyl aspartate and inorganic phosphate, the committed step in the de novo pyrimidine nucleotide biosynthesis pathway. This chain is Aspartate carbamoyltransferase catalytic subunit, found in Leptospira interrogans serogroup Icterohaemorrhagiae serovar Lai (strain 56601).